A 166-amino-acid polypeptide reads, in one-letter code: MEIKTIQSEEEKLIGKNVFLTTLDAVFNWARGNSLWPLTFGLACCAIEVMAAGGPKYDFSRFGYEVWRPSPRHADLMIVAGTITKKMQPLVLRLYEQMAEPKYVIAMGSCAISGGPFVDSYHVVPGANTFLPVDVYIPGCPPRPEALLYGWLELKRKIQNPRVVKR.

Residues cysteine 44, cysteine 45, cysteine 110, and cysteine 140 each coordinate [4Fe-4S] cluster.

The protein belongs to the complex I 20 kDa subunit family. As to quaternary structure, NDH-1 is composed of 14 different subunits. Subunits NuoB, C, D, E, F, and G constitute the peripheral sector of the complex. [4Fe-4S] cluster is required as a cofactor.

The protein localises to the cell membrane. The catalysed reaction is a quinone + NADH + 5 H(+)(in) = a quinol + NAD(+) + 4 H(+)(out). NDH-1 shuttles electrons from NADH, via FMN and iron-sulfur (Fe-S) centers, to quinones in the respiratory chain. The immediate electron acceptor for the enzyme in this species is believed to be a menaquinone. Couples the redox reaction to proton translocation (for every two electrons transferred, four hydrogen ions are translocated across the cytoplasmic membrane), and thus conserves the redox energy in a proton gradient. This Carboxydothermus hydrogenoformans (strain ATCC BAA-161 / DSM 6008 / Z-2901) protein is NADH-quinone oxidoreductase subunit B.